The primary structure comprises 387 residues: Calcium sensing receptor, chloroplastic (387 aa).

The transit peptide at Met1–Ser33 directs the protein to the chloroplast. The Lumenal, thylakoid portion of the chain corresponds to Val34 to Pro186. Residues Ser187 to Phe207 traverse the membrane as a helical segment. Residues Ser208–Asp387 are Stromal-facing. Positions Cys231–Ser352 constitute a Rhodanese domain. Thr380 is subject to Phosphothreonine.

Post-translationally, phosphorylation seems to be light-dependent. As to expression, predominantly expressed in the shoot, including guard cells.

It localises to the plastid. The protein resides in the chloroplast thylakoid membrane. Modulates cytoplasmic Ca(2+) concentration and is crucial for proper stomatal regulation in response to elevated levels of external Ca(2+). May function by regulating concentrations of inositol 1,4,5-trisphosphate (IP3), which in turn triggers release of Ca(2+) from internal stores. May play a role in de-etiolation. The protein is Calcium sensing receptor, chloroplastic (CAS) of Arabidopsis thaliana (Mouse-ear cress).